The primary structure comprises 151 residues: UPF0208 membrane protein YfbV (151 aa).

Over 1–45 (MSTPDNRSVNFFSLFCRGQHYSKTWPLEKRLAPVFVENRVIKMTR) the chain is Cytoplasmic. A helical transmembrane segment spans residues 46–65 (YAIRFMPPIAVFTLCWQIAL). At 66-68 (GGQ) the chain is on the periplasmic side. Residues 69–91 (LGPAVATALFALSLPMQGLWWLG) traverse the membrane as a helical segment. Topologically, residues 92–151 (KRSVTPLPPAILNWFYEVRGKLQESGQVLAPVEGKPDYQALADTLKRAFKQLDKTFLDDL) are cytoplasmic.

Belongs to the UPF0208 family.

Its subcellular location is the cell inner membrane. The protein is UPF0208 membrane protein YfbV (yfbV) of Escherichia coli O6:H1 (strain CFT073 / ATCC 700928 / UPEC).